The primary structure comprises 548 residues: Probable malate:quinone oxidoreductase (548 aa).

This sequence belongs to the MQO family. The cofactor is FAD.

The catalysed reaction is (S)-malate + a quinone = a quinol + oxaloacetate. It functions in the pathway carbohydrate metabolism; tricarboxylic acid cycle; oxaloacetate from (S)-malate (quinone route): step 1/1. This is Probable malate:quinone oxidoreductase from Escherichia coli O127:H6 (strain E2348/69 / EPEC).